Here is a 117-residue protein sequence, read N- to C-terminus: Hainantoxin-XV-2 (117 aa).

A signal peptide spans 1 to 20 (MKLCAVIIASLLVCVAVASS). The segment at 20-55 (SSDNQKEFAQEKEMTREETQSLGEHEKDDEVTGSEE) is disordered. Residues 21–56 (SDNQKEFAQEKEMTREETQSLGEHEKDDEVTGSEER) constitute a propeptide that is removed on maturation. Basic and acidic residues predominate over residues 23 to 55 (NQKEFAQEKEMTREETQSLGEHEKDDEVTGSEE). 4 cysteine pairs are disulfide-bonded: cysteine 58–cysteine 72, cysteine 65–cysteine 78, cysteine 69–cysteine 115, and cysteine 71–cysteine 91.

It belongs to the neurotoxin 03 (Tx2) family. 02 subfamily. HNTX-XV sub-subfamily. Expressed by the venom gland.

The protein resides in the secreted. Its function is as follows. Putative ion channel inhibitor. This chain is Hainantoxin-XV-2, found in Cyriopagopus hainanus (Chinese bird spider).